The primary structure comprises 110 residues: U1-lycotoxin-Ls1ee (110 aa).

The first 20 residues, Met-1–Ala-20, serve as a signal peptide directing secretion. Residues Glu-21–Arg-44 constitute a propeptide that is removed on maturation. 4 disulfides stabilise this stretch: Cys-47-Cys-62, Cys-54-Cys-71, Cys-61-Cys-89, and Cys-73-Cys-87.

Belongs to the neurotoxin 19 (CSTX) family. 03 subfamily. In terms of tissue distribution, expressed by the venom gland.

Its subcellular location is the secreted. The polypeptide is U1-lycotoxin-Ls1ee (Lycosa singoriensis (Wolf spider)).